The primary structure comprises 777 residues: Endonuclease MutS2 (777 aa).

328 to 335 (GPNTGGKT) serves as a coordination point for ATP. The region spanning 702-777 (LDLRGKRYEE…GSGCTIATLG (76 aa)) is the Smr domain.

The protein belongs to the DNA mismatch repair MutS family. MutS2 subfamily. In terms of assembly, homodimer. Binds to stalled ribosomes, contacting rRNA.

Functionally, endonuclease that is involved in the suppression of homologous recombination and thus may have a key role in the control of bacterial genetic diversity. Acts as a ribosome collision sensor, splitting the ribosome into its 2 subunits. Detects stalled/collided 70S ribosomes which it binds and splits by an ATP-hydrolysis driven conformational change. Acts upstream of the ribosome quality control system (RQC), a ribosome-associated complex that mediates the extraction of incompletely synthesized nascent chains from stalled ribosomes and their subsequent degradation. Probably generates substrates for RQC. This chain is Endonuclease MutS2, found in Streptococcus uberis (strain ATCC BAA-854 / 0140J).